We begin with the raw amino-acid sequence, 143 residues long: Transcriptional regulator MraZ (143 aa).

SpoVT-AbrB domains follow at residues 5–47 (SHAP…PMAE) and 76–119 (AADD…DAQR).

The protein belongs to the MraZ family. Forms oligomers.

The protein resides in the cytoplasm. It is found in the nucleoid. In Frankia casuarinae (strain DSM 45818 / CECT 9043 / HFP020203 / CcI3), this protein is Transcriptional regulator MraZ.